The chain runs to 405 residues: Tryptophan synthase beta chain (405 aa).

The residue at position 95 (Lys-95) is an N6-(pyridoxal phosphate)lysine.

The protein belongs to the TrpB family. Tetramer of two alpha and two beta chains. Pyridoxal 5'-phosphate serves as cofactor.

The enzyme catalyses (1S,2R)-1-C-(indol-3-yl)glycerol 3-phosphate + L-serine = D-glyceraldehyde 3-phosphate + L-tryptophan + H2O. Its pathway is amino-acid biosynthesis; L-tryptophan biosynthesis; L-tryptophan from chorismate: step 5/5. Functionally, the beta subunit is responsible for the synthesis of L-tryptophan from indole and L-serine. In Pseudomonas putida (strain ATCC 47054 / DSM 6125 / CFBP 8728 / NCIMB 11950 / KT2440), this protein is Tryptophan synthase beta chain.